Reading from the N-terminus, the 245-residue chain is Ribonuclease PH (245 aa).

Phosphate is bound by residues R93 and 131–133; that span reads GTR.

It belongs to the RNase PH family. As to quaternary structure, homohexameric ring arranged as a trimer of dimers.

The catalysed reaction is tRNA(n+1) + phosphate = tRNA(n) + a ribonucleoside 5'-diphosphate. Functionally, phosphorolytic 3'-5' exoribonuclease that plays an important role in tRNA 3'-end maturation. Removes nucleotide residues following the 3'-CCA terminus of tRNAs; can also add nucleotides to the ends of RNA molecules by using nucleoside diphosphates as substrates, but this may not be physiologically important. Probably plays a role in initiation of 16S rRNA degradation (leading to ribosome degradation) during starvation. This chain is Ribonuclease PH, found in Corynebacterium glutamicum (strain ATCC 13032 / DSM 20300 / JCM 1318 / BCRC 11384 / CCUG 27702 / LMG 3730 / NBRC 12168 / NCIMB 10025 / NRRL B-2784 / 534).